Consider the following 453-residue polypeptide: Tubulin alpha-2 chain (453 aa).

GTP is bound at residue glutamine 11. N6-acetyllysine is present on lysine 40. Residues glutamate 71, glycine 144, threonine 145, threonine 179, asparagine 206, and asparagine 228 each coordinate GTP. Glutamate 71 provides a ligand contact to Mg(2+). Residue glutamate 254 is part of the active site. The disordered stretch occupies residues 432–453 (YEEVGAETAEGEGEEEDFGEEY).

Belongs to the tubulin family. As to quaternary structure, dimer of alpha and beta chains. A typical microtubule is a hollow water-filled tube with an outer diameter of 25 nm and an inner diameter of 15 nM. Alpha-beta heterodimers associate head-to-tail to form protofilaments running lengthwise along the microtubule wall with the beta-tubulin subunit facing the microtubule plus end conferring a structural polarity. Microtubules usually have 13 protofilaments but different protofilament numbers can be found in some organisms and specialized cells. The cofactor is Mg(2+). Undergoes a tyrosination/detyrosination cycle, the cyclic removal and re-addition of a C-terminal tyrosine residue by the enzymes tubulin tyrosine carboxypeptidase (TTCP) and tubulin tyrosine ligase (TTL), respectively. In terms of processing, acetylation of alpha chains at Lys-40 stabilizes microtubules and affects affinity and processivity of microtubule motors. This modification has a role in multiple cellular functions, ranging from cell motility, cell cycle progression or cell differentiation to intracellular trafficking and signaling.

It is found in the cytoplasm. Its subcellular location is the cytoskeleton. The enzyme catalyses GTP + H2O = GDP + phosphate + H(+). Functionally, tubulin is the major constituent of microtubules, a cylinder consisting of laterally associated linear protofilaments composed of alpha- and beta-tubulin heterodimers. Microtubules grow by the addition of GTP-tubulin dimers to the microtubule end, where a stabilizing cap forms. Below the cap, tubulin dimers are in GDP-bound state, owing to GTPase activity of alpha-tubulin. The polypeptide is Tubulin alpha-2 chain (TUBA2) (Pelvetia fastigiata (Brown alga)).